Reading from the N-terminus, the 132-residue chain is MNKKKKINRTKVDTVRSVNNNIRSSVRKLNPILKAIVGKKVDVAIRELQFSAKRITREIRKTVSSAVANAENNNQYDIDKLIVKEAYCGKKVVMKRFRPRAKGRAAPILKPYSTITIILSEAKQMESHGSKS.

It belongs to the universal ribosomal protein uL22 family. As to quaternary structure, part of the 50S ribosomal subunit.

Its function is as follows. This protein binds specifically to 23S rRNA; its binding is stimulated by other ribosomal proteins, e.g. L4, L17, and L20. It is important during the early stages of 50S assembly. It makes multiple contacts with different domains of the 23S rRNA in the assembled 50S subunit and ribosome. In terms of biological role, the globular domain of the protein is located near the polypeptide exit tunnel on the outside of the subunit, while an extended beta-hairpin is found that lines the wall of the exit tunnel in the center of the 70S ribosome. The sequence is that of Large ribosomal subunit protein uL22 from Pelagibacter ubique (strain HTCC1062).